We begin with the raw amino-acid sequence, 160 residues long: Dysbindin domain-containing protein 1 (160 aa).

Residues S3, S97, and S121 each carry the phosphoserine modification. The interval 95–160 is disordered; that stretch reads ADSDDENLAT…FLTVEEPKED (66 aa). Residues 127 to 143 are compositionally biased toward basic and acidic residues; sequence TRAEQNREKQPPSDPER.

Belongs to the dysbindin family.

The protein is Dysbindin domain-containing protein 1 (Dbndd1) of Mus musculus (Mouse).